The following is a 1477-amino-acid chain: Lysine-specific demethylase rbr-2 (1477 aa).

Positions 1-37 are disordered; the sequence is MRARRQENSISTPSAPSTSTSPRKKASIGNSRSKNHG. Positions 9 to 21 are enriched in low complexity; it reads SISTPSAPSTSTS. Residues 56–97 enclose the JmjN domain; that stretch reads APIYYPTEEEFSDPIEYVAKIRHEAEKFGVVKIVPPANFKPP. Positions 121-218 constitute an ARID domain; it reads VKEKHTFIDR…HIEPFNRNLK (98 aa). The tract at residues 222-314 is disordered; that stretch reads MKNDDESDDE…KAEGDDDDDE (93 aa). Residues 246–259 are compositionally biased toward basic and acidic residues; that stretch reads MRTEIEVPNDKTTE. 2 stretches are compositionally biased toward basic residues: residues 272–283 and 295–304; these read GRRRSKNKKASS and NSTRGRKNKK. A PHD-type 1 zinc finger spans residues 319–371; it reads QVFCVACNEGKDEDLLLLCDIDGCNNGRHTYCCDPVLDEVPEGEWRCPKCIES. A JmjC domain is found at 468 to 634; the sequence is QYASHAWNLN…KGRECVESYS (167 aa). Fe cation is bound by residues His-514, Asp-517, and His-602. Residues 874–926 adopt a coiled-coil conformation; it reads IIDKLEKWMEQVEMWRNRAKDAIYREQEYSKEEIEKIIEEGDEYDIKLEEIDE. The segment at 1203–1257 adopts a PHD-type 2 zinc-finger fold; that stretch reads LEACSCLGFNKSDDSESTLTCIMCDSEFHVRCCEWSPFLEKLPEGCFLCVRCLRG. Positions 1375–1404 are disordered; that stretch reads TAKRKRPSVSHKETSKKSRKRQSQASPSEY. A PHD-type 3 zinc finger spans residues 1411-1466; it reads FKSCQARACLKPYGDSVNWVMCEAGCKNWFHVICLGFTLREINDMHEYRCSSCLDH.

This sequence belongs to the JARID1 histone demethylase family. Fe(2+) serves as cofactor.

The protein localises to the nucleus. The catalysed reaction is N(6),N(6),N(6)-trimethyl-L-lysyl(4)-[histone H3] + 3 2-oxoglutarate + 3 O2 = L-lysyl(4)-[histone H3] + 3 formaldehyde + 3 succinate + 3 CO2. Its function is as follows. Histone demethylase that specifically demethylates 'Lys-4' of histone H3, thereby playing a central role in histone code. Does not demethylate histone H3 'Lys-9', H3 'Lys-27', H3 'Lys-36', H3 'Lys-79' or H4 'Lys-20'. Demethylates trimethylated and dimethylated but not monomethylated H3 'Lys-4'. Required for normal longevity of the soma in a germline-dependent manner. Implicated in the epigenetic inheritance of lifespan over several generations. Involved in larval development and vulva formation. The sequence is that of Lysine-specific demethylase rbr-2 (rbr-2) from Caenorhabditis elegans.